We begin with the raw amino-acid sequence, 95 residues long: Protein TusB (95 aa).

The protein belongs to the DsrH/TusB family. Heterohexamer, formed by a dimer of trimers. The hexameric TusBCD complex contains 2 copies each of TusB, TusC and TusD. The TusBCD complex interacts with TusE.

The protein resides in the cytoplasm. Functionally, part of a sulfur-relay system required for 2-thiolation of 5-methylaminomethyl-2-thiouridine (mnm(5)s(2)U) at tRNA wobble positions. This Erwinia tasmaniensis (strain DSM 17950 / CFBP 7177 / CIP 109463 / NCPPB 4357 / Et1/99) protein is Protein TusB.